Consider the following 266-residue polypeptide: GTP cyclohydrolase III (266 aa).

It belongs to the archaeal-type GTP cyclohydrolase family.

It carries out the reaction GTP + 3 H2O = 2-amino-5-formylamino-6-(5-phospho-D-ribosylamino)pyrimidin-4(3H)-one + 2 phosphate + 2 H(+). Catalyzes the formation of 2-amino-5-formylamino-6-ribofuranosylamino-4(3H)-pyrimidinone ribonucleotide monophosphate and inorganic phosphate from GTP. Also has an independent pyrophosphate phosphohydrolase activity. The polypeptide is GTP cyclohydrolase III (Methanococcus maripaludis (strain C5 / ATCC BAA-1333)).